Here is a 205-residue protein sequence, read N- to C-terminus: Urease accessory protein UreG (205 aa).

11–18 (GPVGSGKT) contacts GTP.

Belongs to the SIMIBI class G3E GTPase family. UreG subfamily. As to quaternary structure, homodimer. UreD, UreF and UreG form a complex that acts as a GTP-hydrolysis-dependent molecular chaperone, activating the urease apoprotein by helping to assemble the nickel containing metallocenter of UreC. The UreE protein probably delivers the nickel.

It is found in the cytoplasm. Facilitates the functional incorporation of the urease nickel metallocenter. This process requires GTP hydrolysis, probably effectuated by UreG. This Prochlorococcus marinus (strain NATL1A) protein is Urease accessory protein UreG.